Here is a 184-residue protein sequence, read N- to C-terminus: Probable RNA 2'-phosphotransferase (184 aa).

It belongs to the KptA/TPT1 family.

In terms of biological role, removes the 2'-phosphate from RNA via an intermediate in which the phosphate is ADP-ribosylated by NAD followed by a presumed transesterification to release the RNA and generate ADP-ribose 1''-2''-cyclic phosphate (APPR&gt;P). May function as an ADP-ribosylase. The sequence is that of Probable RNA 2'-phosphotransferase from Rhodopirellula baltica (strain DSM 10527 / NCIMB 13988 / SH1).